Reading from the N-terminus, the 37-residue chain is Large ribosomal subunit protein bL36 (37 aa).

Belongs to the bacterial ribosomal protein bL36 family.

The sequence is that of Large ribosomal subunit protein bL36 from Desulfitobacterium hafniense (strain Y51).